A 274-amino-acid chain; its full sequence is Large ribosomal subunit protein bL28m (274 aa).

Residues 249-274 (SETEEFGLGQEEDLFMKEEPKPTKMA) form a disordered region. Residues 262–274 (LFMKEEPKPTKMA) show a composition bias toward basic and acidic residues.

This sequence belongs to the bacterial ribosomal protein bL28 family. As to quaternary structure, component of the mitochondrial large ribosomal subunit (mt-LSU). Mature N.crassa 74S mitochondrial ribosomes consist of a small (37S) and a large (54S) subunit. The 37S small subunit contains a 16S ribosomal RNA (16S mt-rRNA) and 32 different proteins. The 54S large subunit contains a 23S rRNA (23S mt-rRNA) and 42 different proteins.

Its subcellular location is the mitochondrion. In terms of biological role, component of the mitochondrial ribosome (mitoribosome), a dedicated translation machinery responsible for the synthesis of mitochondrial genome-encoded proteins, including at least some of the essential transmembrane subunits of the mitochondrial respiratory chain. The mitoribosomes are attached to the mitochondrial inner membrane and translation products are cotranslationally integrated into the membrane. This is Large ribosomal subunit protein bL28m (mrpl24) from Neurospora crassa (strain ATCC 24698 / 74-OR23-1A / CBS 708.71 / DSM 1257 / FGSC 987).